A 53-amino-acid chain; its full sequence is UPF0391 membrane protein ESA_03375 (53 aa).

A run of 2 helical transmembrane segments spans residues 4-24 (WGIIFLVIALIAAALGFGGLA) and 28-48 (AGAAKIVFVVGIILFLVSLFM).

This sequence belongs to the UPF0391 family.

It is found in the cell membrane. This is UPF0391 membrane protein ESA_03375 from Cronobacter sakazakii (strain ATCC BAA-894) (Enterobacter sakazakii).